An 887-amino-acid polypeptide reads, in one-letter code: Cytoplasmic aconitate hydratase (887 aa).

Substrate is bound by residues Q84 and 204 to 206; that span reads DSH. [4Fe-4S] cluster-binding residues include C436, C502, and C505. Substrate is bound by residues R535, R540, R697, and 777 to 778; that span reads SR.

Belongs to the aconitase/IPM isomerase family. Interacts with gex-3. [4Fe-4S] cluster is required as a cofactor.

It is found in the cytoplasm. The protein localises to the cytosol. The catalysed reaction is citrate = D-threo-isocitrate. Its function is as follows. Catalyzes the isomerization of citrate to isocitrate via cis-aconitate. Has probably no RNA-binding activity. This Caenorhabditis elegans protein is Cytoplasmic aconitate hydratase (aco-1).